A 519-amino-acid chain; its full sequence is 2-isopropylmalate synthase (519 aa).

Positions 5–267 constitute a Pyruvate carboxyltransferase domain; the sequence is VIIFDTTLRD…QTRINHKEIY (263 aa). Mn(2+)-binding residues include Asp14, His202, His204, and Asn238. Residues 392–519 are regulatory domain; that stretch reads VMNYFNTQSG…RKHHTTQEAV (128 aa).

Belongs to the alpha-IPM synthase/homocitrate synthase family. LeuA type 1 subfamily. Homodimer. Requires Mn(2+) as cofactor.

It localises to the cytoplasm. The catalysed reaction is 3-methyl-2-oxobutanoate + acetyl-CoA + H2O = (2S)-2-isopropylmalate + CoA + H(+). It participates in amino-acid biosynthesis; L-leucine biosynthesis; L-leucine from 3-methyl-2-oxobutanoate: step 1/4. Catalyzes the condensation of the acetyl group of acetyl-CoA with 3-methyl-2-oxobutanoate (2-ketoisovalerate) to form 3-carboxy-3-hydroxy-4-methylpentanoate (2-isopropylmalate). This is 2-isopropylmalate synthase from Proteus mirabilis (strain HI4320).